A 322-amino-acid chain; its full sequence is tRNA U34 carboxymethyltransferase (322 aa).

Lys-91, Trp-105, Lys-110, Gly-129, Met-195, Tyr-199, and Arg-314 together coordinate carboxy-S-adenosyl-L-methionine.

Belongs to the class I-like SAM-binding methyltransferase superfamily. CmoB family. As to quaternary structure, homotetramer.

The catalysed reaction is carboxy-S-adenosyl-L-methionine + 5-hydroxyuridine(34) in tRNA = 5-carboxymethoxyuridine(34) in tRNA + S-adenosyl-L-homocysteine + H(+). Its function is as follows. Catalyzes carboxymethyl transfer from carboxy-S-adenosyl-L-methionine (Cx-SAM) to 5-hydroxyuridine (ho5U) to form 5-carboxymethoxyuridine (cmo5U) at position 34 in tRNAs. The polypeptide is tRNA U34 carboxymethyltransferase (Ectopseudomonas mendocina (strain ymp) (Pseudomonas mendocina)).